We begin with the raw amino-acid sequence, 306 residues long: MKIGTRGSALALTQTRQIAARLQGQYPEMHLEIVVIKTSGDIQKDVPLAKIGGKGLFIKEIEEALLAGTVDLAVHSMKDLPAELPEGLQIAAVPRREDPRDVLISGICREFDNLPAGARIGTGSLRRSVQLRDWRPDLEIVPLRGNLDTRIRKVAQAALDGVVVAAAGIRRMGWAEKVTQFIPTEKMLPAVGQGVLCLETREEDEDLKAGLAFLEDKRTRREVTAERAFLRRLGGGCTLPVAAFAEQRGDVLTIRGMVGSLNERTMIRQEIYGSVEQAVDLGTELAERLLDGGGRILLEHLEDGQP.

At C237 the chain carries S-(dipyrrolylmethanemethyl)cysteine.

It belongs to the HMBS family. As to quaternary structure, monomer. Requires dipyrromethane as cofactor.

The catalysed reaction is 4 porphobilinogen + H2O = hydroxymethylbilane + 4 NH4(+). The protein operates within porphyrin-containing compound metabolism; protoporphyrin-IX biosynthesis; coproporphyrinogen-III from 5-aminolevulinate: step 2/4. In terms of biological role, tetrapolymerization of the monopyrrole PBG into the hydroxymethylbilane pre-uroporphyrinogen in several discrete steps. The sequence is that of Porphobilinogen deaminase from Syntrophus aciditrophicus (strain SB).